The following is a 201-amino-acid chain: MALSWVLTVLSLLPLLEAQIPLCANLVPVPITNATLDRITGKWFYIASAFRNEEYNKSVQEIQATFFYFTPNKTEDTIFLREYQTRQNQCFYNSSYLNVQRENGTVSRYEGGREHVAHLLFLRDTKTLMFGSYLDDEKNWGLSFYADKPETTKEQLGEFYEALDCLCIPRSDVMYTDWKKDKCEPLEKQHEKERKQEEGES.

The N-terminal stretch at 1–18 (MALSWVLTVLSLLPLLEA) is a signal peptide. Gln-19 carries the post-translational modification Pyrrolidone carboxylic acid. 2 disulfides stabilise this stretch: Cys-23–Cys-165 and Cys-90–Cys-183. Asn-33 carries an N-linked (GlcNAc...) (complex) asparagine glycan. N-linked (GlcNAc...) asparagine glycosylation is found at Asn-56, Asn-72, Asn-93, and Asn-103.

Belongs to the calycin superfamily. Lipocalin family. In terms of processing, N-glycosylated. N-glycan heterogeneity at Asn-33: Hex5HexNAc4 (minor), Hex6HexNAc5 (major) and dHex1Hex6HexNAc5 (minor). In terms of tissue distribution, expressed by the liver and secreted in plasma.

The protein resides in the secreted. In terms of biological role, functions as a transport protein in the blood stream. Binds various hydrophobic ligands in the interior of its beta-barrel domain. Also binds synthetic drugs and influences their distribution and availability. Appears to function in modulating the activity of the immune system during the acute-phase reaction. The protein is Alpha-1-acid glycoprotein 2 (ORM2) of Homo sapiens (Human).